Consider the following 208-residue polypeptide: MAKYTEAKCRMCRREGCKLFLKGDRCFTDKCAYDRRPYAPGQHGRARKKVSEYAVQLREKQKTRRIYGILERQFHGYFVKADMQKGVTGTNLLVILERRLDNVVYRLGFANSRNQARQLVRHGVFTLNGRKVNIPSLQVRLGDTIEVPEKNRKIPVLAEAQEVIARRGCPAWLEADGAAFKGTVKAMPQRDDIQFPVNEQLIVELYSK.

The S4 RNA-binding domain occupies 98–161 (RRLDNVVYRL…RKIPVLAEAQ (64 aa)).

Belongs to the universal ribosomal protein uS4 family. In terms of assembly, part of the 30S ribosomal subunit. Contacts protein S5. The interaction surface between S4 and S5 is involved in control of translational fidelity.

Its function is as follows. One of the primary rRNA binding proteins, it binds directly to 16S rRNA where it nucleates assembly of the body of the 30S subunit. In terms of biological role, with S5 and S12 plays an important role in translational accuracy. This is Small ribosomal subunit protein uS4 from Desulfovibrio desulfuricans (strain ATCC 27774 / DSM 6949 / MB).